A 407-amino-acid chain; its full sequence is Phosphoglycerate kinase (407 aa).

Residues 24-26, R40, 63-66, R121, and R154 each bind substrate; these read DFN and HLGR. ATP is bound by residues K205, E337, and 363 to 366; that span reads GGDS.

This sequence belongs to the phosphoglycerate kinase family. In terms of assembly, monomer.

The protein resides in the cytoplasm. It carries out the reaction (2R)-3-phosphoglycerate + ATP = (2R)-3-phospho-glyceroyl phosphate + ADP. Its pathway is carbohydrate degradation; glycolysis; pyruvate from D-glyceraldehyde 3-phosphate: step 2/5. The sequence is that of Phosphoglycerate kinase from Gloeobacter violaceus (strain ATCC 29082 / PCC 7421).